Reading from the N-terminus, the 424-residue chain is Dihydrolipoyllysine-residue succinyltransferase component of 2-oxoglutarate dehydrogenase complex (424 aa).

The Lipoyl-binding domain maps to 1–76 (MPEVKVPELA…EVGQAIAVVG (76 aa)). N6-lipoyllysine is present on lysine 42. Disordered regions lie at residues 76–138 (GEGS…KYAR) and 155–204 (VRKE…RKKT). Basic and acidic residues predominate over residues 91 to 105 (EAPKQETETSTDDKS). Residues 122 to 131 (DNNQRVNATP) are compositionally biased toward polar residues. The Peripheral subunit-binding (PSBD) domain occupies 128–164 (NATPSARKYAREKGIDLSEIAAASNDVVRKEHVDQSQ). Residues 162 to 176 (QSQTQTSTQQQAQPA) show a composition bias toward low complexity. Active-site residues include histidine 395 and aspartate 399.

It belongs to the 2-oxoacid dehydrogenase family. As to quaternary structure, forms a 24-polypeptide structural core with octahedral symmetry. Part of the 2-oxoglutarate dehydrogenase (OGDH) complex composed of E1 (2-oxoglutarate dehydrogenase), E2 (dihydrolipoamide succinyltransferase) and E3 (dihydrolipoamide dehydrogenase); the complex contains multiple copies of the three enzymatic components (E1, E2 and E3). It depends on (R)-lipoate as a cofactor.

The catalysed reaction is N(6)-[(R)-dihydrolipoyl]-L-lysyl-[protein] + succinyl-CoA = N(6)-[(R)-S(8)-succinyldihydrolipoyl]-L-lysyl-[protein] + CoA. Its pathway is amino-acid degradation; L-lysine degradation via saccharopine pathway; glutaryl-CoA from L-lysine: step 6/6. In terms of biological role, E2 component of the 2-oxoglutarate dehydrogenase (OGDH) complex which catalyzes the second step in the conversion of 2-oxoglutarate to succinyl-CoA and CO(2). The polypeptide is Dihydrolipoyllysine-residue succinyltransferase component of 2-oxoglutarate dehydrogenase complex (odhB) (Staphylococcus saprophyticus subsp. saprophyticus (strain ATCC 15305 / DSM 20229 / NCIMB 8711 / NCTC 7292 / S-41)).